The sequence spans 783 residues: Lon protease (783 aa).

The 193-residue stretch at 11-203 folds into the Lon N-terminal domain; sequence IPVLPLRDVV…FLMGQMESEI (193 aa). 355 to 362 serves as a coordination point for ATP; it reads GPPGVGKT. Positions 591 to 772 constitute a Lon proteolytic domain; it reads SNRIGQVTGL…DEVLKVALER (182 aa). Catalysis depends on residues Ser-678 and Lys-721.

This sequence belongs to the peptidase S16 family. Homohexamer. Organized in a ring with a central cavity.

It is found in the cytoplasm. It carries out the reaction Hydrolysis of proteins in presence of ATP.. Functionally, ATP-dependent serine protease that mediates the selective degradation of mutant and abnormal proteins as well as certain short-lived regulatory proteins. Required for cellular homeostasis and for survival from DNA damage and developmental changes induced by stress. Degrades polypeptides processively to yield small peptide fragments that are 5 to 10 amino acids long. Binds to DNA in a double-stranded, site-specific manner. Regulates swarmer cell differentiation of V.parahaemolyticus. This Vibrio parahaemolyticus serotype O3:K6 (strain RIMD 2210633) protein is Lon protease.